The primary structure comprises 241 residues: Urease accessory protein UreF (241 aa).

The protein belongs to the UreF family. UreD, UreF and UreG form a complex that acts as a GTP-hydrolysis-dependent molecular chaperone, activating the urease apoprotein by helping to assemble the nickel containing metallocenter of UreC. The UreE protein probably delivers the nickel.

It is found in the cytoplasm. Functionally, required for maturation of urease via the functional incorporation of the urease nickel metallocenter. This Rhodopseudomonas palustris (strain BisB18) protein is Urease accessory protein UreF.